Consider the following 260-residue polypeptide: Proteasome subunit alpha (260 aa).

It belongs to the peptidase T1A family. As to quaternary structure, the 20S proteasome core is composed of 14 alpha and 14 beta subunits that assemble into four stacked heptameric rings, resulting in a barrel-shaped structure. The two inner rings, each composed of seven catalytic beta subunits, are sandwiched by two outer rings, each composed of seven alpha subunits. The catalytic chamber with the active sites is on the inside of the barrel. Has a gated structure, the ends of the cylinder being occluded by the N-termini of the alpha-subunits. Is capped at one or both ends by the proteasome regulatory ATPase, PAN.

It localises to the cytoplasm. Its activity is regulated as follows. The formation of the proteasomal ATPase PAN-20S proteasome complex, via the docking of the C-termini of PAN into the intersubunit pockets in the alpha-rings, triggers opening of the gate for substrate entry. Interconversion between the open-gate and close-gate conformations leads to a dynamic regulation of the 20S proteasome proteolysis activity. Component of the proteasome core, a large protease complex with broad specificity involved in protein degradation. The chain is Proteasome subunit alpha from Pyrococcus abyssi (strain GE5 / Orsay).